Consider the following 118-residue polypeptide: Large ribosomal subunit protein bL20 (118 aa).

The protein belongs to the bacterial ribosomal protein bL20 family.

Its function is as follows. Binds directly to 23S ribosomal RNA and is necessary for the in vitro assembly process of the 50S ribosomal subunit. It is not involved in the protein synthesizing functions of that subunit. The polypeptide is Large ribosomal subunit protein bL20 (Salmonella arizonae (strain ATCC BAA-731 / CDC346-86 / RSK2980)).